The primary structure comprises 146 residues: Large ribosomal subunit protein uL15 (146 aa).

Residues M1–P56 are disordered. Composition is skewed to gly residues over residues R21–Q35 and S42–G52.

The protein belongs to the universal ribosomal protein uL15 family. As to quaternary structure, part of the 50S ribosomal subunit.

Its function is as follows. Binds to the 23S rRNA. The sequence is that of Large ribosomal subunit protein uL15 from Clostridium botulinum (strain Okra / Type B1).